The following is a 206-amino-acid chain: Large ribosomal subunit protein uL3 (206 aa).

Positions 127-151 (SGGPSSHGSKFHRHLGGTGQATTPA) are disordered.

It belongs to the universal ribosomal protein uL3 family. Part of the 50S ribosomal subunit. Forms a cluster with proteins L14 and L19.

In terms of biological role, one of the primary rRNA binding proteins, it binds directly near the 3'-end of the 23S rRNA, where it nucleates assembly of the 50S subunit. In Borreliella burgdorferi (strain ZS7) (Borrelia burgdorferi), this protein is Large ribosomal subunit protein uL3.